An 863-amino-acid polypeptide reads, in one-letter code: Chloride channel protein A (863 aa).

At Met-1–Thr-124 the chain is on the cytoplasmic side. The interval Glu-48–Arg-78 is disordered. Residues Asn-49 to Gly-71 are compositionally biased toward low complexity. 7 consecutive transmembrane segments (helical) span residues Phe-125–Val-145, Ile-171–Ile-191, Leu-228–Ile-248, Gly-289–Phe-309, Thr-324–Met-344, Leu-367–Leu-387, and Val-408–Phe-428. The interval Lys-434 to Ser-460 is disordered. Over residues Gly-439–Ser-460 the composition is skewed to low complexity. The next 3 helical transmembrane spans lie at Ile-518 to Thr-538, Ser-539 to Gly-559, and Leu-561 to Gly-581. 2 consecutive CBS domains span residues Met-661–Gln-742 and Met-816–Leu-863.

It belongs to the chloride channel (TC 2.A.49) family.

It is found in the membrane. In terms of biological role, voltage-gated chloride channel. Chloride channels may have several functions including the regulation of cell volume, membrane potential stabilization and signal transduction. This Dictyostelium discoideum (Social amoeba) protein is Chloride channel protein A (clcA).